We begin with the raw amino-acid sequence, 409 residues long: Shaggy-related protein kinase NtK-1 (409 aa).

The disordered stretch occupies residues 1–27 (MTSVGLAPVSGLRESSSHSVGVDRLPE). The Protein kinase domain occupies 73-357 (YMAERIVGQG…ALEAVTHAFF (285 aa)). Residues 79 to 87 (VGQGSFGVV) and Lys-102 each bind ATP. Catalysis depends on Asp-198, which acts as the Proton acceptor.

This sequence belongs to the protein kinase superfamily. CMGC Ser/Thr protein kinase family. GSK-3 subfamily. Post-translationally, autophosphorylated mainly on threonine and serine residues.

The catalysed reaction is L-seryl-[protein] + ATP = O-phospho-L-seryl-[protein] + ADP + H(+). The enzyme catalyses L-threonyl-[protein] + ATP = O-phospho-L-threonyl-[protein] + ADP + H(+). In terms of biological role, may mediate extracellular signals to regulate transcription in differentiating cells. The protein is Shaggy-related protein kinase NtK-1 (NTK-1) of Nicotiana tabacum (Common tobacco).